Consider the following 465-residue polypeptide: E3 ubiquitin-protein ligase TRIM38 (465 aa).

The RING-type zinc-finger motif lies at 16-63; sequence CSICLSLMTNPVSINCGHSYCHLCITDFFKNPSQKQLRQETFCCPQCR. A Phosphoserine modification is found at Ser70. A B box-type zinc finger spans residues 88-129; it reads DQEMSCEEHGEQFHLFCEDEGQLICWRCERAPQHKGHTTALV. Positions 93, 96, 115, and 121 each coordinate Zn(2+). Residues 274–465 form the B30.2/SPRY domain; the sequence is CNVSKLYFDV…SPLFLPPPGD (192 aa).

Interacts (via B30.2/SPRY domain) with TAB2 and TAB3. As to expression, ubiquitous.

It is found in the cytoplasm. It carries out the reaction S-ubiquitinyl-[E2 ubiquitin-conjugating enzyme]-L-cysteine + [acceptor protein]-L-lysine = [E2 ubiquitin-conjugating enzyme]-L-cysteine + N(6)-ubiquitinyl-[acceptor protein]-L-lysine.. It participates in protein modification; protein ubiquitination. Its pathway is protein modification; protein sumoylation. Functionally, E3 ubiquitin-protein and E3 SUMO-protein ligase that acts as a regulator of innate immunity. Acts as a negative regulator of type I interferon IFN-beta production by catalyzing 'Lys-48'-linked polyubiquitination of AZI2/NAP1, leading to its degradation. Mediates 'Lys-48'-linked polyubiquitination and proteasomal degradation of the critical TLR adapter TICAM1, inhibiting TLR3-mediated type I interferon signaling. Acts as positive regulator of the cGAS-STING pathway by acting as a E3 SUMO-protein ligase: mediates sumoylation of CGAS and STING, preventing their degradation and thereby activating the innate immune response to DNA virus. Also acts as a negative regulator of NF-kappa-B signaling independently of its E3 protein ligase activity by promoting lysosome-dependent degradation of TAB2 and TAB3 adapters. The sequence is that of E3 ubiquitin-protein ligase TRIM38 from Homo sapiens (Human).